The following is a 237-amino-acid chain: 7-cyano-7-deazaguanine synthase (237 aa).

An ATP-binding site is contributed by 10–20 (FSGGQDSTTCL). Residues cysteine 189, cysteine 198, cysteine 201, and cysteine 204 each coordinate Zn(2+).

Belongs to the QueC family. Requires Zn(2+) as cofactor.

The catalysed reaction is 7-carboxy-7-deazaguanine + NH4(+) + ATP = 7-cyano-7-deazaguanine + ADP + phosphate + H2O + H(+). The protein operates within purine metabolism; 7-cyano-7-deazaguanine biosynthesis. Catalyzes the ATP-dependent conversion of 7-carboxy-7-deazaguanine (CDG) to 7-cyano-7-deazaguanine (preQ(0)). This is 7-cyano-7-deazaguanine synthase from Aeromonas salmonicida (strain A449).